The following is a 383-amino-acid chain: Pantothenate kinase 1 (383 aa).

This sequence belongs to the type II pantothenate kinase family. As to expression, highly expressed in leaves and developing seeds. Expressed in roots, stems and flowers.

It carries out the reaction (R)-pantothenate + ATP = (R)-4'-phosphopantothenate + ADP + H(+). It functions in the pathway cofactor biosynthesis; coenzyme A biosynthesis; CoA from (R)-pantothenate: step 1/5. With respect to regulation, regulated by feedback inhibition by malonyl-CoA. In terms of biological role, catalyzes the phosphorylation of pantothenate the first step in CoA biosynthesis. May play a role in the physiological regulation of the intracellular CoA concentration. Functionally redudant with PANK2. The polypeptide is Pantothenate kinase 1 (PANK1) (Arabidopsis thaliana (Mouse-ear cress)).